The following is a 344-amino-acid chain: Putative 2-hydroxyacid dehydrogenase YoaD (344 aa).

Residue Asp193 participates in NAD(+) binding. Residue Arg251 is part of the active site. Asp275 is a binding site for NAD(+). Glu280 is a catalytic residue. Catalysis depends on His300, which acts as the Proton donor.

The protein belongs to the D-isomer specific 2-hydroxyacid dehydrogenase family.

The chain is Putative 2-hydroxyacid dehydrogenase YoaD (yoaD) from Bacillus subtilis (strain 168).